The chain runs to 515 residues: Maturase K (515 aa).

Belongs to the intron maturase 2 family. MatK subfamily.

It localises to the plastid. The protein resides in the chloroplast. Its function is as follows. Usually encoded in the trnK tRNA gene intron. Probably assists in splicing its own and other chloroplast group II introns. The polypeptide is Maturase K (Pinus pumila (Dwarf Siberian pine)).